A 303-amino-acid polypeptide reads, in one-letter code: Hemolysin C (303 aa).

CBS domains lie at 81–143 and 146–203; these read MVPR…NSPL and LIRK…IDDE.

Belongs to the UPF0053 family. Hemolysin C subfamily.

The sequence is that of Hemolysin C (tlyC) from Rickettsia prowazekii (strain Madrid E).